Reading from the N-terminus, the 763-residue chain is MRFNHFSIVDKNFDEQLAELDQLGFRWSVFWDEKKILKDFLIQSPTDMTVLQANTELDVIEFLKSSIELDWEIFWNITLQLLDFVPNFDFEIGKATEFAKKLNLPQRDVEMTTETIISAFYYLLCSRRKSGMILVEHWVSEGLLPLDNHYHFFNDKSLATFDSSLLEREVVWVESPVDTEQKGKNDLIKIQIIRPKSTEKLPVVITASPYHLGINEKANDLALHEMNVDLEKKDSHKIHVQGKLPQKRPSETKELPIVDKAPYRFTHGWTYSLNDYFLTRGFASIYVAGVGTRGSNGFQTSGDYQQIYSMTAVIDWLNGRTRAYTSRKKTHEIKATWANGKVAMTGKSYLGTMAYGAATTGVDGLEVILAEAGISSWYNYYRENGLVRSPGGFPGEDLDVLAALTYSRNLDGADYLKGNDEYEKRLAEMTTALDRKSGDYNQFWHDRNYLINSDQVRADVLIVHGLQDWNVTPEQAYNFWQALPEGHAKHAFLHRGAHIYMNSWQSIDFSETINAYFSAKLLDRDLNLNLPPVILQENSKEQVWSAVSKFGGDDQLKLPLGKTAVSFAQFDNHYDDESFKKYSKDFNVFKKDLFENKANEAVIDLELPSELTINGPIELEIRLKLNDSKGLLSAQILDFGPKKRLEDKARVKDFKVLDRGRNFMLDDLVELPLVESPYQLVTKGFTNLQNKDLLTVSDLKADEWFTLKFELQPTIYHLEKADKLRVILYSTDFEHTVRDNRKVTYEIDLSQSKLIIPIESVKK.

Residues serine 348, aspartate 468, and histidine 498 each act as charge relay system in the active site.

This sequence belongs to the peptidase S15 family. In terms of assembly, homodimer.

The protein resides in the cytoplasm. The catalysed reaction is Hydrolyzes Xaa-Pro-|- bonds to release unblocked, N-terminal dipeptides from substrates including Ala-Pro-|-p-nitroanilide and (sequentially) Tyr-Pro-|-Phe-Pro-|-Gly-Pro-|-Ile.. In terms of biological role, removes N-terminal dipeptides sequentially from polypeptides having unsubstituted N-termini provided that the penultimate residue is proline. The polypeptide is Xaa-Pro dipeptidyl-peptidase (pepX) (Lactococcus lactis subsp. lactis (strain IL1403) (Streptococcus lactis)).